The sequence spans 235 residues: UPF0502 protein Bcep18194_B0081 (235 aa).

The protein belongs to the UPF0502 family.

This Burkholderia lata (strain ATCC 17760 / DSM 23089 / LMG 22485 / NCIMB 9086 / R18194 / 383) protein is UPF0502 protein Bcep18194_B0081.